Consider the following 53-residue polypeptide: UPF0391 membrane protein YtjA (53 aa).

Helical transmembrane passes span 4–24 and 30–48; these read WGII…GGLA and AAKI…SLFM.

It belongs to the UPF0391 family.

It is found in the cell membrane. The sequence is that of UPF0391 membrane protein YtjA from Salmonella agona (strain SL483).